Here is a 405-residue protein sequence, read N- to C-terminus: Acetate kinase (405 aa).

Asparagine 7 provides a ligand contact to Mg(2+). Lysine 14 provides a ligand contact to ATP. Arginine 92 contributes to the substrate binding site. Aspartate 149 (proton donor/acceptor) is an active-site residue. Residues histidine 209–glycine 213 and aspartate 284–arginine 286 contribute to the ATP site. Residue glutamate 389 coordinates Mg(2+).

The protein belongs to the acetokinase family. Homodimer. Requires Mg(2+) as cofactor. Mn(2+) serves as cofactor.

The protein localises to the cytoplasm. The catalysed reaction is acetate + ATP = acetyl phosphate + ADP. The protein operates within metabolic intermediate biosynthesis; acetyl-CoA biosynthesis; acetyl-CoA from acetate: step 1/2. In terms of biological role, catalyzes the formation of acetyl phosphate from acetate and ATP. Can also catalyze the reverse reaction. This is Acetate kinase from Borreliella burgdorferi (strain ZS7) (Borrelia burgdorferi).